The sequence spans 1033 residues: MRRKTLEIYSVELDGTKDTKQLGQEEGKKCNELDLKKSSQKEELKKELDLDDHKLTSEELEQKYGTNIIRGLSSTRAAELLARDGPNALSPPKQTPEIIKFLKQMIGGFSILLWVGAILCWIAYGIQYASNQSGSLDNVYLGVVLALVVILTGIFAYYQEAKSTNIMSSFSKMIPQEALVTRDAEKKVIPAEQLVVGDIVEIKGGDQIPADIRLLFSQGCKVDNSSLTGESEPQPRSAEFTHENPLETKNIAFYSTTCLEGTATGMVINTGDRTIIGRIASLASGVGNEKTPIATEIEHFVHIVAGVAVSIGILFFIIAVSLKYRVLDSIIFLIGIIVANVPEGLLATVTVTLSLTAKRMAKKNCLVKNLEAVETLGSTSVICSDKTGTLTQNRMTVAHLWFDSQIFTADTSESQSNQAFDQSSGTWASLSKIIALCNRAEFRPGQENVPIMKRVVVGDASETALLKFSEVILGDVMEIRKRNRKVAEIPFNSTNKFQLSIHETEDPGDPRFLMVMKGAPERILEKCSTIMINGQEQPLDKNNANAFHTAYMELGGMGERVLGFCHLYLPAHEFPENYSFDVDTMNFPTSNLCFVGLLSMIDPPRSTVPDAVAKCRSAGIKVIMVTGDHPITAKAIAKSVGIISANSETVEDIAKRCNIAVEQVNKQDARAAVVTGMELKDMTPEQLDEILANYPEIVFARTSPQQKLIIVEGCQRQNAVVAVTGDGVNDSPALKKADIGIAMGIAGSDAAKNAADMVLLDDNFASIVTGVEEGRLIFDNLKKTIAYTLTKNIAELCPFLVYIIVGLPLPIGTITILFIDLGTDIIPSIALAYEKVESDIMNRKPRHKKKDRLVNHQLAIYSYLHIGLMQALGAFLVYFTVYAQQGFWPTSLIQLRVKWEQDYVNDLEDSYGQQWTRYQRKYLEWTGYTAFFVGIMVQQIADLIIRKTRRNSIFQQGLFRNKVIWVGITSQIIVALILSCGLGSITALNFTMLRVQYWFVAVPHAILIWVYDEVRKLFLRLYPGSWWDKNMYY.

The Cytoplasmic portion of the chain corresponds to 1 to 96; the sequence is MRRKTLEIYS…NALSPPKQTP (96 aa). A helical membrane pass occupies residues 97–117; that stretch reads EIIKFLKQMIGGFSILLWVGA. At 118–140 the chain is on the lumenal side; the sequence is ILCWIAYGIQYASNQSGSLDNVY. Residues 141-161 form a helical membrane-spanning segment; the sequence is LGVVLALVVILTGIFAYYQEA. At 162 to 297 the chain is on the cytoplasmic side; the sequence is KSTNIMSSFS…NEKTPIATEI (136 aa). Residues 298–317 traverse the membrane as a helical segment; it reads EHFVHIVAGVAVSIGILFFI. Over 318-329 the chain is Lumenal; the sequence is IAVSLKYRVLDS. A helical transmembrane segment spans residues 330 to 347; sequence IIFLIGIIVANVPEGLLA. Topologically, residues 348 to 781 are cytoplasmic; it reads TVTVTLSLTA…EEGRLIFDNL (434 aa). Aspartate 385 (4-aspartylphosphate intermediate) is an active-site residue. 2 residues coordinate Mg(2+): aspartate 726 and aspartate 730. Residues 782-801 form a helical membrane-spanning segment; it reads KKTIAYTLTKNIAELCPFLV. Over 802–811 the chain is Lumenal; sequence YIIVGLPLPI. The helical transmembrane segment at 812–832 threads the bilayer; sequence GTITILFIDLGTDIIPSIALA. At 833-852 the chain is on the cytoplasmic side; it reads YEKVESDIMNRKPRHKKKDR. Residues 853 to 875 traverse the membrane as a helical segment; it reads LVNHQLAIYSYLHIGLMQALGAF. Residues 876–927 are Lumenal-facing; that stretch reads LVYFTVYAQQGFWPTSLIQLRVKWEQDYVNDLEDSYGQQWTRYQRKYLEWTG. A helical transmembrane segment spans residues 928–947; that stretch reads YTAFFVGIMVQQIADLIIRK. The Cytoplasmic segment spans residues 948–961; that stretch reads TRRNSIFQQGLFRN. Phosphoserine; by PKA is present on serine 952. Residues 962–980 form a helical membrane-spanning segment; sequence KVIWVGITSQIIVALILSC. Topologically, residues 981–995 are lumenal; it reads GLGSITALNFTMLRV. A helical membrane pass occupies residues 996 to 1016; it reads QYWFVAVPHAILIWVYDEVRK. Over 1017 to 1033 the chain is Cytoplasmic; that stretch reads LFLRLYPGSWWDKNMYY.

The protein belongs to the cation transport ATPase (P-type) (TC 3.A.3) family. Type IIC subfamily. As to quaternary structure, composed of two subunits: alpha (catalytic) and beta. Found in skin, kidney and distal colon.

It localises to the membrane. It catalyses the reaction K(+)(out) + ATP + H2O + H(+)(in) = K(+)(in) + ADP + phosphate + 2 H(+)(out). Functionally, catalyzes the hydrolysis of ATP coupled with the exchange of H(+) and K(+) ions across the plasma membrane. Responsible for potassium absorption in various tissues. The chain is Potassium-transporting ATPase alpha chain 2 (ATP12A) from Cavia porcellus (Guinea pig).